We begin with the raw amino-acid sequence, 363 residues long: Flagellar P-ring protein (363 aa).

The signal sequence occupies residues 1–20 (MKIKLILACALMVFSAASSA).

This sequence belongs to the FlgI family. As to quaternary structure, the basal body constitutes a major portion of the flagellar organelle and consists of four rings (L,P,S, and M) mounted on a central rod.

The protein resides in the periplasm. It is found in the bacterial flagellum basal body. Functionally, assembles around the rod to form the L-ring and probably protects the motor/basal body from shearing forces during rotation. The polypeptide is Flagellar P-ring protein (Shewanella loihica (strain ATCC BAA-1088 / PV-4)).